We begin with the raw amino-acid sequence, 242 residues long: Probable transcriptional regulatory protein LBA0733 (242 aa).

The interval 1 to 22 is disordered; it reads MSGHSKWHNIQGRKNAQDAKRG.

Belongs to the TACO1 family.

Its subcellular location is the cytoplasm. The sequence is that of Probable transcriptional regulatory protein LBA0733 from Lactobacillus acidophilus (strain ATCC 700396 / NCK56 / N2 / NCFM).